The primary structure comprises 647 residues: Threonine--tRNA ligase (647 aa).

The TGS domain occupies 1–61 (MINITFPDGA…TEDGSIEIVT (61 aa)). The tract at residues 242–540 (DHRKLGKELD…LIENYKGAFP (299 aa)) is catalytic. Zn(2+) contacts are provided by Cys336, His387, and His517.

It belongs to the class-II aminoacyl-tRNA synthetase family. In terms of assembly, homodimer. The cofactor is Zn(2+).

It is found in the cytoplasm. It catalyses the reaction tRNA(Thr) + L-threonine + ATP = L-threonyl-tRNA(Thr) + AMP + diphosphate + H(+). In terms of biological role, catalyzes the attachment of threonine to tRNA(Thr) in a two-step reaction: L-threonine is first activated by ATP to form Thr-AMP and then transferred to the acceptor end of tRNA(Thr). Also edits incorrectly charged L-seryl-tRNA(Thr). This is Threonine--tRNA ligase from Streptococcus pneumoniae serotype 2 (strain D39 / NCTC 7466).